Reading from the N-terminus, the 471-residue chain is Regulator of microtubule dynamics protein 3 (471 aa).

Residues 1 to 12 lie on the Mitochondrial intermembrane side of the membrane; the sequence is MSRLGALGGSRA. A helical membrane pass occupies residues 13–35; sequence GLGLLLGTAAGLGFLCVLYSQRW. The Cytoplasmic segment spans residues 36–471; the sequence is KRTQRHGRSQ…LEELEVILGK (436 aa). Residues Ser44, Ser46, Ser50, and Ser57 each carry the phosphoserine modification. A coiled-coil region spans residues 91–125; sequence LDRLDFVLTSLMALRREVEELQRSLQGLAGEIVGE. The short motif at 157 to 163 is the FFAT element; that stretch reads VYFTASS. The residue at position 160 (Thr160) is a Phosphothreonine. The interval 168–203 is disordered; sequence TDAESEGGYTTANAESDYERDSDKESEDAEDEVSCE. Phosphoserine occurs at positions 183, 193, 212, and 233. The segment covering 191-201 has biased composition (acidic residues); that stretch reads KESEDAEDEVS.

It belongs to the RMDN family. In terms of assembly, interacts with PTPN2. Interacts with microtubules. Interacts with VAPB. Interacts (via FFAT motif) with MOSPD2 (via MSP domain). Interacts (via phosphorylated FFAT motif) with MOSPD2, VAPA and VAPB. Phosphorylation at Thr-160 of the FFAT motif activates interaction with MOSPD2, VAPA and VAPB.

It localises to the mitochondrion outer membrane. Its subcellular location is the cytoplasm. It is found in the nucleus. The protein localises to the cytoskeleton. The protein resides in the spindle. It localises to the spindle pole. Functionally, involved in cellular calcium homeostasis regulation. May participate in differentiation and apoptosis of keratinocytes. Overexpression induces apoptosis. The polypeptide is Regulator of microtubule dynamics protein 3 (Rattus norvegicus (Rat)).